Here is a 572-residue protein sequence, read N- to C-terminus: 2-isopropylmalate synthase (572 aa).

A Pyruvate carboxyltransferase domain is found at Pro31–Asn305. The Mg(2+) site is built by Asp40, His244, His246, and Asn280. The interval Asn437–Val572 is regulatory domain.

The protein belongs to the alpha-IPM synthase/homocitrate synthase family. LeuA type 2 subfamily. Homodimer. Mg(2+) is required as a cofactor.

The protein resides in the cytoplasm. It catalyses the reaction 3-methyl-2-oxobutanoate + acetyl-CoA + H2O = (2S)-2-isopropylmalate + CoA + H(+). It participates in amino-acid biosynthesis; L-leucine biosynthesis; L-leucine from 3-methyl-2-oxobutanoate: step 1/4. Catalyzes the condensation of the acetyl group of acetyl-CoA with 3-methyl-2-oxobutanoate (2-ketoisovalerate) to form 3-carboxy-3-hydroxy-4-methylpentanoate (2-isopropylmalate). This chain is 2-isopropylmalate synthase, found in Paraburkholderia phytofirmans (strain DSM 17436 / LMG 22146 / PsJN) (Burkholderia phytofirmans).